The primary structure comprises 561 residues: DNA ligase B (561 aa).

The active-site N6-AMP-lysine intermediate is K125.

Belongs to the NAD-dependent DNA ligase family. LigB subfamily.

It carries out the reaction NAD(+) + (deoxyribonucleotide)n-3'-hydroxyl + 5'-phospho-(deoxyribonucleotide)m = (deoxyribonucleotide)n+m + AMP + beta-nicotinamide D-nucleotide.. Its function is as follows. Catalyzes the formation of phosphodiester linkages between 5'-phosphoryl and 3'-hydroxyl groups in double-stranded DNA using NAD as a coenzyme and as the energy source for the reaction. This Salmonella paratyphi B (strain ATCC BAA-1250 / SPB7) protein is DNA ligase B.